Reading from the N-terminus, the 405-residue chain is Tryptophan synthase beta chain (405 aa).

Residue lysine 96 is modified to N6-(pyridoxal phosphate)lysine.

Belongs to the TrpB family. In terms of assembly, tetramer of two alpha and two beta chains. Pyridoxal 5'-phosphate serves as cofactor.

It catalyses the reaction (1S,2R)-1-C-(indol-3-yl)glycerol 3-phosphate + L-serine = D-glyceraldehyde 3-phosphate + L-tryptophan + H2O. Its pathway is amino-acid biosynthesis; L-tryptophan biosynthesis; L-tryptophan from chorismate: step 5/5. In terms of biological role, the beta subunit is responsible for the synthesis of L-tryptophan from indole and L-serine. The chain is Tryptophan synthase beta chain from Clostridium botulinum (strain Alaska E43 / Type E3).